Reading from the N-terminus, the 21-residue chain is Brevinin-1OKb (21 aa).

The residue at position 21 (Lys21) is a Lysine amide.

In terms of tissue distribution, expressed by the skin glands.

Its subcellular location is the secreted. Antimicrobial peptide. The sequence is that of Brevinin-1OKb from Nidirana okinavana (Kampira Falls frog).